A 422-amino-acid chain; its full sequence is Serine--tRNA ligase (422 aa).

Position 231-233 (231-233 (TSE)) interacts with L-serine. Residue 262–264 (RQE) coordinates ATP. An L-serine-binding site is contributed by Glu-285. 349–352 (EISS) contacts ATP. Ser-384 contacts L-serine.

This sequence belongs to the class-II aminoacyl-tRNA synthetase family. Type-1 seryl-tRNA synthetase subfamily. Homodimer. The tRNA molecule binds across the dimer.

It localises to the cytoplasm. The enzyme catalyses tRNA(Ser) + L-serine + ATP = L-seryl-tRNA(Ser) + AMP + diphosphate + H(+). It carries out the reaction tRNA(Sec) + L-serine + ATP = L-seryl-tRNA(Sec) + AMP + diphosphate + H(+). The protein operates within aminoacyl-tRNA biosynthesis; selenocysteinyl-tRNA(Sec) biosynthesis; L-seryl-tRNA(Sec) from L-serine and tRNA(Sec): step 1/1. Its function is as follows. Catalyzes the attachment of serine to tRNA(Ser). Is also able to aminoacylate tRNA(Sec) with serine, to form the misacylated tRNA L-seryl-tRNA(Sec), which will be further converted into selenocysteinyl-tRNA(Sec). In Mycoplasma capricolum subsp. capricolum (strain California kid / ATCC 27343 / NCTC 10154), this protein is Serine--tRNA ligase.